The primary structure comprises 251 residues: MLISRYTGIPILKDTLYAHPYEAVGEFQFDDSVVAVFPDMIQRSVPGYQTILTGIGELTAKYAQPNSQLYDLGCSLGAATLTMRRKAPQGSQIIAVDTSQPMIERAKEHIEGFHSDIPVRLLCDDMTQIPIENASVVVINFTLQFIEPSARQVLLDKIYQGLKPGGILILSEKIHFESAELQEAIEHLQLQFKRANGYSELEISQKRASLENVLISDSEATHLNRLQQSGFKAANIWFQAYNFASFLAIKA.

Residues tyrosine 48, 73 to 75, asparagine 140, and arginine 207 contribute to the S-adenosyl-L-methionine site; that span reads GCS.

The protein belongs to the class I-like SAM-binding methyltransferase superfamily. Cx-SAM synthase family. As to quaternary structure, homodimer.

It catalyses the reaction prephenate + S-adenosyl-L-methionine = carboxy-S-adenosyl-L-methionine + 3-phenylpyruvate + H2O. In terms of biological role, catalyzes the conversion of S-adenosyl-L-methionine (SAM) to carboxy-S-adenosyl-L-methionine (Cx-SAM). The polypeptide is Carboxy-S-adenosyl-L-methionine synthase (Hydrogenovibrio crunogenus (strain DSM 25203 / XCL-2) (Thiomicrospira crunogena)).